Here is a 520-residue protein sequence, read N- to C-terminus: Trichothecene O-acetyltransferase TRI3 (520 aa).

Residues 1 to 23 (MGSKLPELPKLSPEKHRWEKSNV) form a disordered region. Over residues 12–23 (SPEKHRWEKSNV) the composition is skewed to basic and acidic residues.

This sequence belongs to the trichothecene O-acetyltransferase family.

It functions in the pathway sesquiterpene biosynthesis; trichothecene biosynthesis. Functionally, trichothecene O-acetyltransferase; part of the gene cluster that mediates the production of the antimicrobial trichothecene harzianum A (HA) that plays a role in Botrytis cinerea antagonistic activity and plant defense priming. The biosynthesis of harzianum A begins with the cyclization of farnesyl diphosphate to trichodiene and is catalyzed by the trichodiene synthase TRI5. Trichodiene undergoes a series of oxygenations catalyzed by the cytochrome P450 monooxygenase TRI4. TRI4 controls the addition of 3 oxygens at C-2, C-11, and the C-12, C-13-epoxide to form the intermediate isotrichodiol. Isotrichodiol then undergoes a non-enzymatic isomerization and cyclization to form 12,13-epoxytrichothec-9-ene (EPT) which is further converted to trichodermol by the cytochrome P450 monooxygenase TRI11 via C-4 hydroxylation. The last step of HA synthesis is esterification of an octatriendioyl moiety to the C-4 oxygen of trichodermol. The octatriendioyl moiety is probably produced by the polyketide synthase TRI17 and the esterification performed by the trichothecene O-acetyltransferase TRI3. The chain is Trichothecene O-acetyltransferase TRI3 from Trichoderma arundinaceum.